A 531-amino-acid polypeptide reads, in one-letter code: Outer dynein arm-docking complex subunit 4 (531 aa).

TPR repeat units lie at residues 15 to 48 (FSTYMAEGEQLYHKAEYKKASDSFTAALQLQPEE), 50 to 82 (NCLVARSKCFLKLGEPECALKDAEASLQIENDF), and 83 to 116 (FKGLYQKAEALYAMGDFEFALVHYHRGYKLRPEF). The segment at 161–185 (KQKAQVKVQKKDSKQQKKVDPERSQ) is disordered. The segment covering 169–185 (QKKDSKQQKKVDPERSQ) has biased composition (basic and acidic residues). 5 TPR repeats span residues 275-307 (VKSLEEIDQLLSSGKAEESYKKAQLVLKKVERW), 320-353 (GSLHSCIGNAQMDMGQIEAALQSHKKDLAIAEKY), 360-393 (SRALDNIGRVYARIGKFNEAIKVWEEKIPLANSS), 397-430 (TWLYHEIGRCYLELEQTAEAKEYGEKSQQEADAA), and 437-470 (LNACVLLAQAEVKLKHYQSAISSFENALERARLL). The interval 487–531 (KQGMEEQQESEQNNDENDNLRADGNTARDEEEEDVHVQRTEEDEG) is disordered. Residues 492 to 503 (EQQESEQNNDEN) are compositionally biased toward acidic residues. The segment covering 521 to 531 (VHVQRTEEDEG) has biased composition (basic and acidic residues).

In terms of assembly, component of the outer dynein arm-docking complex. In the mucociliary epithelium, specifically expressed in ciliated cells.

It is found in the cytoplasm. The protein resides in the cytoskeleton. Its subcellular location is the cilium axoneme. Component of the outer dynein arm-docking complex (ODA-DC) that mediates outer dynein arms (ODA) binding onto the doublet microtubule. Plays an essential role for the assembly of ODA-DC and in the docking of ODA in ciliary axoneme. Functionally, required for the docking of the outer dynein arm to cilia, hence plays an essential role in cilia motility. This chain is Outer dynein arm-docking complex subunit 4 (odad4), found in Xenopus laevis (African clawed frog).